The following is a 421-amino-acid chain: MKKPSKKSEIEFCTVCRFHHDQGSRHKYFPRHKSSLSSLLDRFRSKIADVRFFLKNPSVLRPQEQSQNRVWCVFCDEDIVELGSSFACSKAINHFASSDHLKNIKQFLSKNGPAMDCIDEFRISEADVAKWEKKCQSFGNEDASFEGSCGQLSGTSNDIHTKLAFETMDRIKKVPAHHINSYKSNDVMPLQYNTNEYQISLSEIPGVIHNGSYLNMDDSQFPLCDESGNGFGEHSIPCRSKDYSGNGNYCTQENYQVSQDKKQIDGSYNPPGVVGMTSISSSHSTDAGGNVHSGAPPPWLDANDGDFSSVQLNQSDVARFQAKVPGKNRKLNPNRVGAAWAERRKIEIEMEKSGHVTKSNIDPDWLPNFGRVWQSGTRKESRKEFEKEKRKLVKTESISTESEPVKIQPYISKRARRESGE.

Residues 11 to 32 (EFCTVCRFHHDQGSRHKYFPRH) form a C2H2-type 1; degenerate zinc finger. The C2H2-type 2; degenerate zinc finger occupies 70 to 100 (VWCVFCDEDIVELGSSFACSKAINHFASSDH). Residues 279–306 (ISSSHSTDAGGNVHSGAPPPWLDANDGD) are disordered. 2 short sequence motifs (nuclear localization signal) span residues 328–335 (NRKLNPNR) and 377–384 (TRKESRKE). The tract at residues 376 to 421 (GTRKESRKEFEKEKRKLVKTESISTESEPVKIQPYISKRARRESGE) is disordered. Positions 377–389 (TRKESRKEFEKEK) are enriched in basic and acidic residues.

As to expression, also present in cotyledons, hypocotyls, stems, veins of sepals and stigmas, and actively dividing tissues such as shoot apical meristem, root tips and emerging true leaves. Weak expression in petals and anthers, and not detected in mature leaves. In seeds, expressed in both the endosperm and embryo.

Its subcellular location is the nucleus. Key regulator for endosperm and embryo nuclear divisions. The protein is TITAN-like protein of Arabidopsis thaliana (Mouse-ear cress).